A 579-amino-acid polypeptide reads, in one-letter code: Mycobactin import ATP-binding/permease protein IrtB (579 aa).

Topologically, residues 1–16 (MIRTWIALVPNDHRAR) are cytoplasmic. A helical transmembrane segment spans residues 17–37 (LIGFALLAFCSVVARAVGTVL). In terms of domain architecture, ABC transmembrane type-1 spans 17 to 299 (LIGFALLAFC…VSELAPALES (283 aa)). Topologically, residues 38 to 52 (LVPLMAALFGEAPQR) are periplasmic. A helical membrane pass occupies residues 53 to 73 (AWLWLGWLSAATVAGWVLDAV). At 74–123 (TARIGIELGFAVLNHTQHDVADRLPVVRLDWFTAENTATARQAIAATGPE) the chain is on the cytoplasmic side. Residues 124–146 (LVGLVVNLVTPLTSAILLPAVIA) traverse the membrane as a helical segment. Residues 147–155 (LALLPISWQ) lie on the Periplasmic side of the membrane. A helical transmembrane segment spans residues 156–178 (LGVAALAGVPLLLGALWASAAFA). Topologically, residues 179 to 237 (RRADTAADKANTALTERIIEFARTQQALRAARRVEPARSLVGNALASQHTATMRLLGMQ) are cytoplasmic. A helical membrane pass occupies residues 238–258 (IPGQLLFSIASQLALIVLAGT). Residues 259 to 579 (TAALTITGTL…EAAEWQILAE (321 aa)) lie on the Periplasmic side of the membrane. Residues 332 to 567 (IEFDDVAFGY…GGRFSQFWRQ (236 aa)) form the ABC transporter domain. 366–373 (GPSGCGKS) is an ATP binding site.

It belongs to the ABC transporter superfamily. Siderophore-Fe(3+) uptake transporter (SIUT) (TC 3.A.1.21) family. As to quaternary structure, forms a heterodimer with IrtA.

The protein localises to the cell inner membrane. Part of the ABC transporter complex IrtAB involved in the import of iron-bound mycobactin (Fe-MBT) and carboxymycobactin (Fe-cMBT). Transmembrane domains (TMD) form a pore in the membrane and the ATP-binding domain (NBD) is responsible for energy generation. The chain is Mycobactin import ATP-binding/permease protein IrtB (irtB) from Mycobacterium bovis (strain ATCC BAA-935 / AF2122/97).